Here is a 307-residue protein sequence, read N- to C-terminus: tRNA pseudouridine synthase B (307 aa).

The active-site Nucleophile is the aspartate 39.

The protein belongs to the pseudouridine synthase TruB family. Type 1 subfamily.

It carries out the reaction uridine(55) in tRNA = pseudouridine(55) in tRNA. In terms of biological role, responsible for synthesis of pseudouridine from uracil-55 in the psi GC loop of transfer RNAs. This chain is tRNA pseudouridine synthase B, found in Lactiplantibacillus plantarum (strain ATCC BAA-793 / NCIMB 8826 / WCFS1) (Lactobacillus plantarum).